Consider the following 374-residue polypeptide: MLSWLLVFSILVLLAQGVSSWENPQTDQVSEGLQQLFGNISQLFEKGILGRDDVFTMVSREEWGAEAIGCSSKLSRPVDVLVIHHIPGLECHNKTVCSQKLRELQAYHIHNSWCDVAYNFLVGDDGRVYEGVGWNVQGSHDQGYKNISLGVAFFGTQEGHSPSPVALSAMKGLISYAVKKGHLSSKYIQPLLAKSEDCLVPPQKGKQKKACPHIVPRSVWGARDSHCSRMTLPAKYAIILHTAGRTCSQPDECRLLVRDLQSFFMNRLNACDIGYNFLVGQDGGVYEGVGWNNQGSKTDSYNDISLSITFMGTFTGSPPNAAALEAAQDLIRCAVVKGYLTPNYLLMGHSDVSNTLSPGQALYNIIKTWPHFKH.

A signal peptide spans 1 to 20 (MLSWLLVFSILVLLAQGVSS). Residues Asn-39, Asn-93, and Asn-146 are each glycosylated (N-linked (GlcNAc...) asparagine). N-acetylmuramoyl-L-alanine amidase domains lie at 76–212 (RPVD…KACP) and 233–359 (PAKY…LSPG). Cystine bridges form between Cys-211–Cys-333, Cys-227–Cys-271, and Cys-247–Cys-253. Residue Tyr-275 participates in peptidoglycan binding. Interaction with murein stretches follow at residues 294–303 (QGSKTDSYND) and 354–355 (NT).

It belongs to the N-acetylmuramoyl-L-alanine amidase 2 family. Homodimer; disulfide-linked. Heterodimer with PGLYRP3; disulfide-linked. As to expression, ubiquitous.

The protein localises to the secreted. In terms of biological role, pattern receptor that binds to murein peptidoglycans (PGN) of Gram-positive bacteria. Has bactericidal activity towards Gram-positive bacteria. May kill Gram-positive bacteria by interfering with peptidoglycan biosynthesis. Also binds to Gram-negative bacteria, and has bacteriostatic activity towards Gram-negative bacteria. Plays a role in innate immunity. The protein is Peptidoglycan recognition protein 4 (Pglyrp4) of Mus musculus (Mouse).